The following is a 356-amino-acid chain: Phosphate acyltransferase (356 aa).

The protein belongs to the PlsX family. In terms of assembly, homodimer. Probably interacts with PlsY.

The protein localises to the cytoplasm. It carries out the reaction a fatty acyl-[ACP] + phosphate = an acyl phosphate + holo-[ACP]. It participates in lipid metabolism; phospholipid metabolism. Functionally, catalyzes the reversible formation of acyl-phosphate (acyl-PO(4)) from acyl-[acyl-carrier-protein] (acyl-ACP). This enzyme utilizes acyl-ACP as fatty acyl donor, but not acyl-CoA. In Shigella sonnei (strain Ss046), this protein is Phosphate acyltransferase.